The following is a 169-amino-acid chain: Probable chemoreceptor glutamine deamidase CheD (169 aa).

This sequence belongs to the CheD family.

It carries out the reaction L-glutaminyl-[protein] + H2O = L-glutamyl-[protein] + NH4(+). Functionally, probably deamidates glutamine residues to glutamate on methyl-accepting chemotaxis receptors (MCPs), playing an important role in chemotaxis. The sequence is that of Probable chemoreceptor glutamine deamidase CheD from Solibacter usitatus (strain Ellin6076).